A 386-amino-acid polypeptide reads, in one-letter code: Protein DOM34 (386 aa).

This sequence belongs to the eukaryotic release factor 1 family. Pelota subfamily. In terms of assembly, monomer. Component of the Dom34-Hbs1 complex, also named Pelota-HBS1L complex, composed of DOM34 and HBS1. The cofactor is a divalent metal cation.

It is found in the cytoplasm. Component of the Dom34-Hbs1 complex, a complex that recognizes stalled ribosomes and triggers the No-Go Decay (NGD) pathway. In the Dom34-Hbs1 complex, DOM34 recognizes ribosomes stalled at the 3' end of an mRNA and engages stalled ribosomes by destabilizing mRNA in the mRNA channel. Following ribosome-binding, the Dom34-Hbs1 complex promotes the disassembly of stalled ribosomes, followed by degradation of damaged mRNAs as part of the NGD pathway. The Dom34-Hbs1 complex is also involved in non-functional rRNA decay. The polypeptide is Protein DOM34 (Saccharomyces cerevisiae (strain ATCC 204508 / S288c) (Baker's yeast)).